Consider the following 290-residue polypeptide: 4-hydroxy-tetrahydrodipicolinate synthase (290 aa).

Threonine 45 is a pyruvate binding site. Tyrosine 133 functions as the Proton donor/acceptor in the catalytic mechanism. Catalysis depends on lysine 161, which acts as the Schiff-base intermediate with substrate. Isoleucine 202 lines the pyruvate pocket.

The protein belongs to the DapA family. In terms of assembly, homotetramer; dimer of dimers.

It is found in the cytoplasm. It carries out the reaction L-aspartate 4-semialdehyde + pyruvate = (2S,4S)-4-hydroxy-2,3,4,5-tetrahydrodipicolinate + H2O + H(+). Its pathway is amino-acid biosynthesis; L-lysine biosynthesis via DAP pathway; (S)-tetrahydrodipicolinate from L-aspartate: step 3/4. Functionally, catalyzes the condensation of (S)-aspartate-beta-semialdehyde [(S)-ASA] and pyruvate to 4-hydroxy-tetrahydrodipicolinate (HTPA). The polypeptide is 4-hydroxy-tetrahydrodipicolinate synthase (Alkalilimnicola ehrlichii (strain ATCC BAA-1101 / DSM 17681 / MLHE-1)).